Reading from the N-terminus, the 365-residue chain is U-box domain-containing protein 56 (365 aa).

A coiled-coil region spans residues 176-281 (YEEQRRRLEI…ELLRALEKGE (106 aa)). The region spanning 293–365 (EPPQCFICPI…AIKDWLQQHP (73 aa)) is the U-box domain.

The enzyme catalyses S-ubiquitinyl-[E2 ubiquitin-conjugating enzyme]-L-cysteine + [acceptor protein]-L-lysine = [E2 ubiquitin-conjugating enzyme]-L-cysteine + N(6)-ubiquitinyl-[acceptor protein]-L-lysine.. The protein operates within protein modification; protein ubiquitination. Functions as an E3 ubiquitin ligase. This chain is U-box domain-containing protein 56 (PUB56), found in Arabidopsis thaliana (Mouse-ear cress).